The sequence spans 137 residues: Competence protein ComGG (137 aa).

The helical transmembrane segment at 10 to 30 (GVLLYAVTIAAIFSLLLQFYL) threads the bilayer. Residues 106-137 (EKRDKKEEVATDSSEKVEKKKSEEKPEKKENS) form a disordered region.

The transformation pili are flexible filaments, consisting mainly of the major pilin ComGC and smaller amounts of the minor pilins, including at least ComGD, ComGF and ComGG, and perhaps ComGE. Interacts with ComGC; the interaction is probably direct. Interacts with ComGD. Interacts with ComGE. Interacts with ComGF. May act as a link between ComGC, ComGD and ComGF.

It is found in the fimbrium. It localises to the cell membrane. In terms of biological role, required for formation of the type IV-like pilus (T4P) that plays a role in transformation. Transformation pili are dynamically extended and retracted, perhaps thereby promoting DNA uptake and transformation. Required for transformation. This is Competence protein ComGG from Streptococcus pneumoniae (strain ATCC BAA-255 / R6).